The primary structure comprises 147 residues: NADH-quinone oxidoreductase subunit A (147 aa).

The next 3 membrane-spanning stretches (helical) occupy residues 13–33 (LFSYAVAIVVLLAAMLGLGAV), 70–90 (YLVAMLFVIFDVESVFLFSWA), and 104–124 (VVVFVASLAAALAYVWRWGAL).

The protein belongs to the complex I subunit 3 family. In terms of assembly, NDH-1 is composed of 14 different subunits. Subunits NuoA, H, J, K, L, M, N constitute the membrane sector of the complex.

The protein resides in the cell inner membrane. It carries out the reaction a quinone + NADH + 5 H(+)(in) = a quinol + NAD(+) + 4 H(+)(out). Functionally, NDH-1 shuttles electrons from NADH, via FMN and iron-sulfur (Fe-S) centers, to quinones in the respiratory chain. The immediate electron acceptor for the enzyme in this species is believed to be ubiquinone. Couples the redox reaction to proton translocation (for every two electrons transferred, four hydrogen ions are translocated across the cytoplasmic membrane), and thus conserves the redox energy in a proton gradient. The chain is NADH-quinone oxidoreductase subunit A from Gluconacetobacter diazotrophicus (strain ATCC 49037 / DSM 5601 / CCUG 37298 / CIP 103539 / LMG 7603 / PAl5).